A 171-amino-acid polypeptide reads, in one-letter code: Endoribonuclease YbeY (171 aa).

Positions 130, 134, and 140 each coordinate Zn(2+).

The protein belongs to the endoribonuclease YbeY family. The cofactor is Zn(2+).

Its subcellular location is the cytoplasm. In terms of biological role, single strand-specific metallo-endoribonuclease involved in late-stage 70S ribosome quality control and in maturation of the 3' terminus of the 16S rRNA. This is Endoribonuclease YbeY from Neisseria meningitidis serogroup A / serotype 4A (strain DSM 15465 / Z2491).